Consider the following 203-residue polypeptide: Suppressor of RNA silencing p3 (203 aa).

This sequence belongs to the tenuiviruses p3 protein family. Homodimer.

The protein localises to the host cytoplasm. Its function is as follows. Acts as a suppressor of RNA-mediated gene silencing, also known as post-transcriptional gene silencing (PTGS), presumably through the binding of dsRNA. The protein is Suppressor of RNA silencing p3 of Oryza sativa (Rice).